The sequence spans 346 residues: Biotin synthase (346 aa).

Residues 38–256 (RQVQVSTLLS…IAVARIMMPT (219 aa)) enclose the Radical SAM core domain. The [4Fe-4S] cluster site is built by Cys-53, Cys-57, and Cys-60. [2Fe-2S] cluster-binding residues include Cys-97, Cys-128, Cys-188, and Arg-260.

Belongs to the radical SAM superfamily. Biotin synthase family. In terms of assembly, homodimer. [4Fe-4S] cluster is required as a cofactor. Requires [2Fe-2S] cluster as cofactor.

It catalyses the reaction (4R,5S)-dethiobiotin + (sulfur carrier)-SH + 2 reduced [2Fe-2S]-[ferredoxin] + 2 S-adenosyl-L-methionine = (sulfur carrier)-H + biotin + 2 5'-deoxyadenosine + 2 L-methionine + 2 oxidized [2Fe-2S]-[ferredoxin]. The protein operates within cofactor biosynthesis; biotin biosynthesis; biotin from 7,8-diaminononanoate: step 2/2. Its function is as follows. Catalyzes the conversion of dethiobiotin (DTB) to biotin by the insertion of a sulfur atom into dethiobiotin via a radical-based mechanism. The polypeptide is Biotin synthase (Escherichia coli (strain K12 / DH10B)).